The following is a 430-amino-acid chain: Mitochondrial distribution and morphology protein 12 (430 aa).

One can recognise an SMP-LTD domain in the interval 1–430; the sequence is MSIDIDWERA…VYPSFWTFLI (430 aa). 3 disordered regions span residues 61–117, 177–276, and 352–377; these read DLSD…YESN, TPLG…RMRE, and MGPE…KPSS. Residues 69–82 show a composition bias toward acidic residues; sequence FYEDDDENFSDSSE. Over residues 85–96 the composition is skewed to basic and acidic residues; that stretch reads SPTREPVDRYGN. Polar residues-rich tracts occupy residues 211–233 and 241–251; these read SAQS…SMSI and ASQGMPNNQGQ. The segment covering 265-276 has biased composition (basic and acidic residues); sequence PLDDTPPRRMRE.

It belongs to the MDM12 family. As to quaternary structure, component of the ER-mitochondria encounter structure (ERMES) or MDM complex, composed of MMM1, MDM10, MDM12 and MDM34. An MMM1 homodimer associates with one molecule of MDM12 on each side in a pairwise head-to-tail manner, and the SMP-LTD domains of MMM1 and MDM12 generate a continuous hydrophobic tunnel for phospholipid trafficking.

It is found in the mitochondrion outer membrane. The protein resides in the endoplasmic reticulum membrane. Component of the ERMES/MDM complex, which serves as a molecular tether to connect the endoplasmic reticulum (ER) and mitochondria. Components of this complex are involved in the control of mitochondrial shape and protein biogenesis, and function in nonvesicular lipid trafficking between the ER and mitochondria. MDM12 is required for the interaction of the ER-resident membrane protein MMM1 and the outer mitochondrial membrane-resident beta-barrel protein MDM10. The MDM12-MMM1 subcomplex functions in the major beta-barrel assembly pathway that is responsible for biogenesis of all mitochondrial outer membrane beta-barrel proteins, and acts in a late step after the SAM complex. The MDM10-MDM12-MMM1 subcomplex further acts in the TOM40-specific pathway after the action of the MDM12-MMM1 complex. Essential for establishing and maintaining the structure of mitochondria and maintenance of mtDNA nucleoids. The sequence is that of Mitochondrial distribution and morphology protein 12 from Ajellomyces capsulatus (strain G186AR / H82 / ATCC MYA-2454 / RMSCC 2432) (Darling's disease fungus).